A 561-amino-acid polypeptide reads, in one-letter code: 2-succinyl-5-enolpyruvyl-6-hydroxy-3-cyclohexene-1-carboxylate synthase (561 aa).

It belongs to the TPP enzyme family. MenD subfamily. Homodimer. The cofactor is Mg(2+). Mn(2+) is required as a cofactor. Thiamine diphosphate serves as cofactor.

The catalysed reaction is isochorismate + 2-oxoglutarate + H(+) = 5-enolpyruvoyl-6-hydroxy-2-succinyl-cyclohex-3-ene-1-carboxylate + CO2. It participates in quinol/quinone metabolism; 1,4-dihydroxy-2-naphthoate biosynthesis; 1,4-dihydroxy-2-naphthoate from chorismate: step 2/7. Its pathway is cofactor biosynthesis; phylloquinone biosynthesis. Catalyzes the thiamine diphosphate-dependent decarboxylation of 2-oxoglutarate and the subsequent addition of the resulting succinic semialdehyde-thiamine pyrophosphate anion to isochorismate to yield 2-succinyl-5-enolpyruvyl-6-hydroxy-3-cyclohexene-1-carboxylate (SEPHCHC). This chain is 2-succinyl-5-enolpyruvyl-6-hydroxy-3-cyclohexene-1-carboxylate synthase, found in Synechococcus sp. (strain CC9605).